A 608-amino-acid polypeptide reads, in one-letter code: Albumin (608 aa).

A signal peptide spans 1 to 18 (MKWVTFLLLLFVSGSAFS). Residues 19–24 (RGVFRR) constitute a propeptide that is removed on maturation. 3 consecutive Albumin domains span residues 19 to 211 (RGVF…GVKE), 212 to 403 (KALV…EFQP), and 404 to 601 (LVEE…NLVT). A Cu cation-binding site is contributed by His27. The residue at position 29 (Ser29) is a Phosphoserine. Residues Glu30 and Asp37 each coordinate Ca(2+). Residues Cys77 and Cys86 are joined by a disulfide bond. Ser82 and Ser89 each carry phosphoserine. His91 provides a ligand contact to Zn(2+). 6 cysteine pairs are disulfide-bonded: Cys99–Cys115, Cys114–Cys125, Cys148–Cys193, Cys192–Cys201, Cys224–Cys270, and Cys269–Cys277. At Lys229 the chain carries N6-succinyllysine. Glu268 is a binding site for Ca(2+). Residues His271 and Asp273 each contribute to the Zn(2+) site. Ca(2+) is bound by residues Asp273, Glu276, and Asp279. 8 disulfide bridges follow: Cys289–Cys303, Cys302–Cys313, Cys340–Cys385, Cys384–Cys393, Cys416–Cys462, Cys461–Cys472, Cys485–Cys501, and Cys500–Cys511. Ser297 is modified (phosphoserine). A Phosphoserine modification is found at Ser443. Thr444 and Thr446 each carry phosphothreonine. At Lys460 the chain carries N6-succinyllysine. The residue at position 513 (Ser513) is a Phosphoserine. 2 disulfides stabilise this stretch: Cys538–Cys583 and Cys582–Cys591. N6-succinyllysine is present on Lys543. Position 558 is an N6-methyllysine (Lys558). Thr570 bears the Phosphothreonine mark. Lys588 is subject to N6-succinyllysine.

Belongs to the ALB/AFP/VDB family. Part of a complex composed of complement component C3, CLCA1/CLCA3, A2ML1/OH and ALB/serum albumin. Interacts with FCGRT; this interaction regulates ALB homeostasis. Interacts with TASOR. In plasma, occurs in a covalently-linked complex with chromophore-bound alpha-1-microglobulin; this interaction does not prevent fatty acid binding to ALB. Post-translationally, phosphorylated by FAM20C in the extracellular medium. In terms of tissue distribution, plasma. Expressed in the granular cells within the cerebellum.

The protein resides in the secreted. Functionally, binds water, Ca(2+), Na(+), K(+), fatty acids, hormones, bilirubin and drugs. Its main function is the regulation of the colloidal osmotic pressure of blood. Major zinc transporter in plasma, typically binds about 80% of all plasma zinc. Major calcium and magnesium transporter in plasma, binds approximately 45% of circulating calcium and magnesium in plasma. Potentially has more than two calcium-binding sites and might additionally bind calcium in a non-specific manner. The shared binding site between zinc and calcium at residue Asp-273 suggests a crosstalk between zinc and calcium transport in the blood. The rank order of affinity is zinc &gt; calcium &gt; magnesium. Binds to the bacterial siderophore enterobactin and inhibits enterobactin-mediated iron uptake of E.coli from ferric transferrin, and may thereby limit the utilization of iron and growth of enteric bacteria such as E.coli. Does not prevent iron uptake by the bacterial siderophore aerobactin. This Mus musculus (Mouse) protein is Albumin (Alb).